A 455-amino-acid polypeptide reads, in one-letter code: Phosphoglucosamine mutase (455 aa).

Ser-103 (phosphoserine intermediate) is an active-site residue. Mg(2+) is bound by residues Ser-103, Asp-243, Asp-245, and Asp-247. Ser-103 carries the post-translational modification Phosphoserine.

This sequence belongs to the phosphohexose mutase family. Requires Mg(2+) as cofactor. Post-translationally, activated by phosphorylation.

The catalysed reaction is alpha-D-glucosamine 1-phosphate = D-glucosamine 6-phosphate. Its function is as follows. Catalyzes the conversion of glucosamine-6-phosphate to glucosamine-1-phosphate. The protein is Phosphoglucosamine mutase of Halorhodospira halophila (strain DSM 244 / SL1) (Ectothiorhodospira halophila (strain DSM 244 / SL1)).